We begin with the raw amino-acid sequence, 540 residues long: MTLTNLDAIVVGAGFSGILAVYRLRKLGFRVQGFERQERLGGVWRENAYPGAAVDSLFPFYQFYDAELLQDWEWGEQFPTRAEMLRYFDHVDKRWEISASFEFGVSVSAARYSETTQRWTVTLEDGRRAEARWFIPAVGFSSVLNIPRIPGMSRFRGAIYHTAKWPHDAVSMRGKRVAVIGTGPSGVQIIQSVGKIAKAMTIFQQSPCLTLRKYGSPNQTATALCMRPDDHREALRLGLQTSNGFGYVPRDQDTLDVPIEERNHFYQQRYLAGGWAFWMAGFRDLCQNIQANRDAYDFWARRTRARIGDVTKRELLVPQIPSFAFGIKRPCLEEDLYEIMDQPHVKIIDISNQQIELITETSIRVHGQTVECEAIIFATGFGDEASGLRSLHIRGRNGIRLEDAWSDGVESHLGMAIHSFPNMFFLYGPQCPTLLVNSPAVITVQVEWLCEIISKCQQAGICQLEATSKSHCQWEKKMSLLWDKTLYHTHARKSKKTAEANKEEKTWVGGLILYRRELENCLANNLEGFQAWYVEETALL.

Residues 43 to 46 and 55 to 58 contribute to the FAD site; these read VWRE and DSLF. NADP(+) is bound by residues 53–55, 182–188, and 205–206; these read AVD, TGPSGVQ, and QS.

The protein belongs to the FAD-binding monooxygenase family. Requires FAD as cofactor.

It participates in alkaloid biosynthesis. In terms of biological role, FAD-binding monooxygenase; part of the gene cluster that mediates the biosynthesis of loline alkaloids, potent insecticidal agents composed of a pyrrolizidine ring system and an uncommon ether bridge linking carbons 2 and 7. Lolines are structurally differentiated by the various modifications of the L-amino group and include norloline, loline, N-methylloline, N-acetylloline, N-acetylnorloline, and N-formylloline. The first committed step is the condensation of O-acetyl-L-homoserine (derived from L-aspartic acid) and L-proline, probably catalyzed by the gamma-type pyridoxal 5'-phosphate(PLP)-dependent enzyme lolC, to give the diamino diacid, NACPP. Ensuing cyclization, decarboxylation, and acetylation steps yield 1-exo-acetamidopyrrolizidine (AcAP). LolO is required for installation of the ether bridge upon the pathway intermediate, 1-exo-acetamidopyrrolizidine (AcAP). In sequential 2-oxoglutarate- and O(2)-consuming steps, lolO removes hydrogens from C2 and C7 of AcAP to form both carbon-oxygen bonds in N-acetylnorloline (NANL), the precursor to all other lolines. The enzymes lolD, lolE, lolF and lolT have also been proposed to be involved in the ether-bridge installation. Further processing of the exocyclic moiety of NANL by fungal N-acetamidase (LolN), methyltransferase (LolM), and cytochrome P450 (LolP) enzymes, with occasional involvement of a plant acetyltransferase, generates the other known lolines. LolN transforms NANL to norlonine which is monomethylated and dimethylated to respectively lonine and N-methyllonine (NML) by lolM. LolP catalyzes hydroxylation of the methyl group in N-methylloline (NML) and further oxygenation to N-formylloline (NFL). A plant acetyltransferase is responsible for the acetylation of loline to form N-acetylloline (NAL). LolA might interact with aspartate kinase to prevent feedback inhibition of its activity by these end products and thereby promote production of l-homoserine from l-aspartate. The sequence is that of FAD-binding monooxygenase lolF2 from Epichloe uncinata (Endophyte fungus).